The sequence spans 232 residues: Orotidine 5'-phosphate decarboxylase (232 aa).

Substrate is bound by residues D13, K35, 62–71 (DLKFHDIPNT), T121, R182, Q191, G211, and R212. The Proton donor role is filled by K64.

Belongs to the OMP decarboxylase family. Type 1 subfamily. As to quaternary structure, homodimer.

It catalyses the reaction orotidine 5'-phosphate + H(+) = UMP + CO2. It participates in pyrimidine metabolism; UMP biosynthesis via de novo pathway; UMP from orotate: step 2/2. Functionally, catalyzes the decarboxylation of orotidine 5'-monophosphate (OMP) to uridine 5'-monophosphate (UMP). The chain is Orotidine 5'-phosphate decarboxylase from Acinetobacter baumannii (strain ACICU).